We begin with the raw amino-acid sequence, 382 residues long: Lipid-A-disaccharide synthase (382 aa).

Belongs to the LpxB family.

It carries out the reaction 2-N,3-O-bis[(3R)-3-hydroxytetradecanoyl]-alpha-D-glucosaminyl 1-phosphate + UDP-2-N,3-O-bis[(3R)-3-hydroxytetradecanoyl]-alpha-D-glucosamine = lipid A disaccharide (E. coli) + UDP + H(+). The catalysed reaction is a lipid X + a UDP-2-N,3-O-bis[(3R)-3-hydroxyacyl]-alpha-D-glucosamine = a lipid A disaccharide + UDP + H(+). It functions in the pathway glycolipid biosynthesis; lipid IV(A) biosynthesis; lipid IV(A) from (3R)-3-hydroxytetradecanoyl-[acyl-carrier-protein] and UDP-N-acetyl-alpha-D-glucosamine: step 5/6. Functionally, condensation of UDP-2,3-diacylglucosamine and 2,3-diacylglucosamine-1-phosphate to form lipid A disaccharide, a precursor of lipid A, a phosphorylated glycolipid that anchors the lipopolysaccharide to the outer membrane of the cell. The protein is Lipid-A-disaccharide synthase of Escherichia coli (strain SMS-3-5 / SECEC).